The chain runs to 72 residues: Translation initiation factor IF-1 (72 aa).

The S1-like domain occupies 1–72 (MAKEEMLEFP…TKGRINYRFK (72 aa)).

The protein belongs to the IF-1 family. In terms of assembly, component of the 30S ribosomal translation pre-initiation complex which assembles on the 30S ribosome in the order IF-2 and IF-3, IF-1 and N-formylmethionyl-tRNA(fMet); mRNA recruitment can occur at any time during PIC assembly.

It is found in the cytoplasm. Its function is as follows. One of the essential components for the initiation of protein synthesis. Stabilizes the binding of IF-2 and IF-3 on the 30S subunit to which N-formylmethionyl-tRNA(fMet) subsequently binds. Helps modulate mRNA selection, yielding the 30S pre-initiation complex (PIC). Upon addition of the 50S ribosomal subunit IF-1, IF-2 and IF-3 are released leaving the mature 70S translation initiation complex. This Jannaschia sp. (strain CCS1) protein is Translation initiation factor IF-1.